Consider the following 1058-residue polypeptide: Ubiquitin-like modifier-activating enzyme 1 (1058 aa).

Residues 1 to 47 (MSSSPLSKKRRVSGPDPKPGSNCSPAQSVLPQVPSAPTNGMAKNGSE) form a disordered region. An N-acetylserine modification is found at Ser2. A phosphoserine mark is found at Ser4, Ser13, Ser21, Ser24, and Ser46. The segment covering 21 to 38 (SNCSPAQSVLPQVPSAPT) has biased composition (polar residues). Phosphotyrosine is present on Tyr55. A run of 2 repeats spans residues 63–199 (GHEA…GQLF) and 459–611 (GSDL…QVVI). The segment at 63 to 611 (GHEAMKRLQT…GTKGNVQVVI (549 aa)) is 2 approximate repeats. ATP-binding positions include Ala478, Asp504, Arg515, Lys528, and 576 to 577 (DN). At Lys528 the chain carries N6-succinyllysine. The Glycyl thioester intermediate role is filled by Cys632. Lys671 carries the N6-acetyllysine modification. Thr800 bears the Phosphothreonine mark. Phosphoserine is present on residues Ser810, Ser816, Ser820, and Ser835. Lys980 is subject to N6-acetyllysine.

It belongs to the ubiquitin-activating E1 family. In terms of assembly, monomer. As to expression, ubiquitous.

The protein localises to the cytoplasm. It is found in the mitochondrion. Its subcellular location is the nucleus. The enzyme catalyses ATP + ubiquitin + [E1 ubiquitin-activating enzyme]-L-cysteine = AMP + diphosphate + S-ubiquitinyl-[E1 ubiquitin-activating enzyme]-L-cysteine.. It participates in protein modification; protein ubiquitination. Its function is as follows. Catalyzes the first step in ubiquitin conjugation to mark cellular proteins for degradation through the ubiquitin-proteasome system. Activates ubiquitin by first adenylating its C-terminal glycine residue with ATP, and thereafter linking this residue to the side chain of a cysteine residue in E1, yielding a ubiquitin-E1 thioester and free AMP. Essential for the formation of radiation-induced foci, timely DNA repair and for response to replication stress. Promotes the recruitment of TP53BP1 and BRCA1 at DNA damage sites. This chain is Ubiquitin-like modifier-activating enzyme 1 (UBA1), found in Oryctolagus cuniculus (Rabbit).